The following is a 357-amino-acid chain: Protein ORF58 (357 aa).

The next 11 helical transmembrane spans lie at Leu-20–Phe-40, Ile-44–Leu-64, Trp-78–Phe-98, Val-101–Ala-121, Ile-132–Leu-152, Phe-157–Phe-177, Val-219–Leu-239, Val-242–Gly-262, Ala-270–Ser-290, Cys-300–Ile-320, and Met-333–Asn-353.

The protein belongs to the herpesviridae BMRF2 family.

The protein resides in the virion membrane. The protein localises to the host cell membrane. Functionally, participates in rearrangement of cellular actin to increase intercellular contacts and thereby promotes virus cell-to-cell spreadin$g. The polypeptide is Protein ORF58 (ORF58) (Homo sapiens (Human)).